A 500-amino-acid chain; its full sequence is Maturase K (500 aa).

This sequence belongs to the intron maturase 2 family. MatK subfamily.

Its subcellular location is the plastid. The protein resides in the chloroplast. In terms of biological role, usually encoded in the trnK tRNA gene intron. Probably assists in splicing its own and other chloroplast group II introns. The protein is Maturase K of Helianthus annuus (Common sunflower).